We begin with the raw amino-acid sequence, 434 residues long: Glutamyl-tRNA reductase (434 aa).

Substrate is bound by residues 52-55 (TCNR), Ser-115, 120-122 (ETQ), and Gln-126. Residue Cys-53 is the Nucleophile of the active site. NADP(+) is bound at residue 195–200 (GAGEMI).

This sequence belongs to the glutamyl-tRNA reductase family. In terms of assembly, homodimer.

It catalyses the reaction (S)-4-amino-5-oxopentanoate + tRNA(Glu) + NADP(+) = L-glutamyl-tRNA(Glu) + NADPH + H(+). It functions in the pathway porphyrin-containing compound metabolism; protoporphyrin-IX biosynthesis; 5-aminolevulinate from L-glutamyl-tRNA(Glu): step 1/2. Catalyzes the NADPH-dependent reduction of glutamyl-tRNA(Glu) to glutamate 1-semialdehyde (GSA). The chain is Glutamyl-tRNA reductase from Cupriavidus necator (strain ATCC 17699 / DSM 428 / KCTC 22496 / NCIMB 10442 / H16 / Stanier 337) (Ralstonia eutropha).